A 226-amino-acid chain; its full sequence is 3-dehydroquinate dehydratase (226 aa).

Residues 33–35 (ELR) and arginine 65 contribute to the 3-dehydroquinate site. Histidine 120 serves as the catalytic Proton donor/acceptor. Catalysis depends on lysine 147, which acts as the Schiff-base intermediate with substrate. Positions 186, 205, and 209 each coordinate 3-dehydroquinate.

Belongs to the type-I 3-dehydroquinase family. In terms of assembly, homodimer.

The catalysed reaction is 3-dehydroquinate = 3-dehydroshikimate + H2O. The protein operates within metabolic intermediate biosynthesis; chorismate biosynthesis; chorismate from D-erythrose 4-phosphate and phosphoenolpyruvate: step 3/7. Functionally, involved in the third step of the chorismate pathway, which leads to the biosynthesis of aromatic amino acids. Catalyzes the cis-dehydration of 3-dehydroquinate (DHQ) and introduces the first double bond of the aromatic ring to yield 3-dehydroshikimate. The chain is 3-dehydroquinate dehydratase from Thermodesulfovibrio yellowstonii (strain ATCC 51303 / DSM 11347 / YP87).